We begin with the raw amino-acid sequence, 413 residues long: MTLFISDSIFSSTEKKGVDFDKAFAGYIVVENGLIQKVGKGDAPESLKSQAEKIIDARGKTITAGLVDAHTHLVHGGSREHELAMKLAGKTYLEIHASGGGIFSTVRATRAASKEELTQKALTSLDRMLIHGTTTAESKSGYGLDMETEIKCLEINSYLNKNHPIDIVSTYMGAHATPPEFKDNKEGYIKFMIEEVMPEVKKRGLAEFSDAFCEDKIFSVEETERIMKAAADLGFKLKLHADEIIPLKGAELAAKMNAHSAEHLMAISDEGITALAKSGTVAVLLPATSFFLMSPIYAPAKKMIEEGVRVALATDYNPGSSPTENLQMAMWAACYKMKLLPAQILRGVTINAAYAIDREKTIGSIEEGKQADLVIFDAPNIDFLVYHFGVNSVDQVWKKGKLVAEKGRLVYKN.

Fe(3+)-binding residues include His70 and His72. Residues His70 and His72 each coordinate Zn(2+). Positions 79, 142, and 175 each coordinate 4-imidazolone-5-propanoate. Tyr142 contributes to the N-formimidoyl-L-glutamate binding site. A Fe(3+)-binding site is contributed by His240. Position 240 (His240) interacts with Zn(2+). Glu243 contributes to the 4-imidazolone-5-propanoate binding site. Asp315 contacts Fe(3+). Asp315 is a binding site for Zn(2+). N-formimidoyl-L-glutamate-binding residues include Asn317 and Gly319. Ser320 contributes to the 4-imidazolone-5-propanoate binding site.

Belongs to the metallo-dependent hydrolases superfamily. HutI family. The cofactor is Zn(2+). Fe(3+) serves as cofactor.

Its subcellular location is the cytoplasm. It catalyses the reaction 4-imidazolone-5-propanoate + H2O = N-formimidoyl-L-glutamate. It functions in the pathway amino-acid degradation; L-histidine degradation into L-glutamate; N-formimidoyl-L-glutamate from L-histidine: step 3/3. Functionally, catalyzes the hydrolytic cleavage of the carbon-nitrogen bond in imidazolone-5-propanoate to yield N-formimidoyl-L-glutamate. It is the third step in the universal histidine degradation pathway. The protein is Imidazolonepropionase of Treponema denticola (strain ATCC 35405 / DSM 14222 / CIP 103919 / JCM 8153 / KCTC 15104).